The primary structure comprises 294 residues: Type 4 apparatus protein DotZ (294 aa).

The T4BSS is a complex nanomachine composed of several subcomplexes. This subunit is part of the Type IV Coupling Complex (T4CC), a subcomplex composed of the DotLMNYZ core and the IcmSW-LvgA adapter subunits, linked by the C-terminal tail of DotL. Six DotLMNYZ hetero-pentameric units may assemble into a hexameric nanomachine, forming an inner membrane channel for effectors to pass through. Makes significant contact with DotN and DotY, but engages weakly with DotM and DotL. DotY and DotZ are co-dependent for the assembly into the T4CC.

Its subcellular location is the cytoplasm. Component of the Dot/Icm type IVB secretion system (T4BSS), which is used to inject bacterial effector proteins into eukaryotic host cells. Part of a subcomplex which recruits effector proteins and delivers them to the core transmembrane subcomplex. DotY and DotZ play a role in effector translocation, but are not essential and do not influence the stability of the subcomplex main components. The DotY/DotZ main function is to optimize secretion by modulating the delivery trajectory of the IcmSW module and the localization of the machinery to the poles. In Legionella pneumophila subsp. pneumophila (strain Philadelphia 1 / ATCC 33152 / DSM 7513), this protein is Type 4 apparatus protein DotZ.